A 172-amino-acid chain; its full sequence is CYLSEDHMLGARENLRLLARMNRLSPHPCLQDRKDFGLPQEMVEGSQLQKDQAISVLHEMLQQCFNLFHIEHSSAAWNTTLLEQLCTGLQQQLEDLDACLGPVMGEKDSDMGRMGPILTVKKYFQDIHVYLKEKEYSDCAWEIIRVEMMRALSSSTTLQKRLRKMGGDLNSL.

2 disulfide bridges follow: C1–C99 and C29–C139. The N-linked (GlcNAc...) asparagine glycan is linked to N78.

Belongs to the alpha/beta interferon family. IFN-alphaII subfamily. Constitutively and exclusively expressed in the mononuclear cells of the extraembryonic trophectoderm.

The protein resides in the secreted. Paracrine hormone primarily responsible for maternal recognition of pregnancy. Interacts with endometrial receptors, probably type I interferon receptors, and blocks estrogen receptor expression, preventing the estrogen-induced increase in oxytocin receptor expression in the endometrium. This results in the suppression of the pulsatile endometrial release of the luteolytic hormone prostaglandin F2-alpha, hindering the regression of the corpus luteum (luteolysis) and therefore a return to ovarian cyclicity. This, and a possible direct effect of IFN-tau on prostaglandin synthesis, leads in turn to continued ovarian progesterone secretion, which stimulates the secretion by the endometrium of the nutrients required for the growth of the conceptus. In summary, displays particularly high antiviral and antiproliferative potency concurrently with particular weak cytotoxicity, high antiluteolytic activity and immunomodulatory properties. In contrast with other IFNs, IFN-tau is not virally inducible. This Bos taurus (Bovine) protein is Interferon tau-3 (IFNT3).